Consider the following 174-residue polypeptide: Nucleoside-triphosphatase THEP1 (174 aa).

Residues 8 to 15 (GIPGIGKS) and 99 to 106 (LIVIDEVG) each bind ATP.

Belongs to the THEP1 NTPase family.

It catalyses the reaction a ribonucleoside 5'-triphosphate + H2O = a ribonucleoside 5'-diphosphate + phosphate + H(+). Functionally, has nucleotide phosphatase activity towards ATP, GTP, CTP, TTP and UTP. May hydrolyze nucleoside diphosphates with lower efficiency. The chain is Nucleoside-triphosphatase THEP1 from Methanosarcina barkeri (strain Fusaro / DSM 804).